Consider the following 283-residue polypeptide: Hydroxyacylglutathione hydrolase-like protein (283 aa).

Zn(2+) is bound by residues H54, H56, D58, H59, H110, D134, and H173.

Belongs to the metallo-beta-lactamase superfamily. Glyoxalase II family. Zn(2+) is required as a cofactor.

Its function is as follows. Hydrolase acting on ester bonds. This Mus musculus (Mouse) protein is Hydroxyacylglutathione hydrolase-like protein (Haghl).